Here is a 399-residue protein sequence, read N- to C-terminus: Tyrosine--tRNA ligase (399 aa).

Residues 44 to 53 carry the 'HIGH' region motif; sequence PTAPDLHLGH. The 'KMSKS' region motif lies at 229-233; sequence KMSKS. K232 lines the ATP pocket. Residues 338-398 enclose the S4 RNA-binding domain; sequence ISITKALVDC…GKRKFAKLKV (61 aa).

Belongs to the class-I aminoacyl-tRNA synthetase family. TyrS type 2 subfamily. As to quaternary structure, homodimer.

The protein localises to the cytoplasm. The catalysed reaction is tRNA(Tyr) + L-tyrosine + ATP = L-tyrosyl-tRNA(Tyr) + AMP + diphosphate + H(+). Functionally, catalyzes the attachment of tyrosine to tRNA(Tyr) in a two-step reaction: tyrosine is first activated by ATP to form Tyr-AMP and then transferred to the acceptor end of tRNA(Tyr). The protein is Tyrosine--tRNA ligase of Sulfurimonas denitrificans (strain ATCC 33889 / DSM 1251) (Thiomicrospira denitrificans (strain ATCC 33889 / DSM 1251)).